The primary structure comprises 665 residues: Probable potassium transport system protein Kup 2 (665 aa).

13 helical membrane passes run 13–33, 55–75, 98–118, 138–158, 167–187, 195–215, 217–237, 250–270, 295–315, 344–364, 375–395, 400–420, and 428–448; these read GLLV…LYVM, ISLI…LIAL, WLVL…TLTP, IPVP…LFLF, IIGK…GLTG, LSLL…SPAN, VGVL…ALYS, SWPY…VWIL, FFAI…LITG, IFIP…VFLF, GLAI…YLSL, ILLR…FLIS, and GGYV…IWYF.

This sequence belongs to the HAK/KUP transporter (TC 2.A.72) family.

It is found in the cell membrane. The catalysed reaction is K(+)(in) + H(+)(in) = K(+)(out) + H(+)(out). Its function is as follows. Transport of potassium into the cell. Likely operates as a K(+):H(+) symporter. The polypeptide is Probable potassium transport system protein Kup 2 (Lactobacillus johnsonii (strain CNCM I-12250 / La1 / NCC 533)).